The chain runs to 120 residues: NADH-quinone oxidoreductase subunit A (120 aa).

Helical transmembrane passes span 10–30 (ILVFLGISLFIAVLALTMGWF), 65–85 (VAILFIIFDLETAFLFPWAVV), and 89–109 (IGWFGFWAMMVFLAILVVGFI).

Belongs to the complex I subunit 3 family. NDH-1 is composed of 14 different subunits. Subunits NuoA, H, J, K, L, M, N constitute the membrane sector of the complex.

The protein resides in the cell inner membrane. It carries out the reaction a quinone + NADH + 5 H(+)(in) = a quinol + NAD(+) + 4 H(+)(out). Functionally, NDH-1 shuttles electrons from NADH, via FMN and iron-sulfur (Fe-S) centers, to quinones in the respiratory chain. The immediate electron acceptor for the enzyme in this species is believed to be ubiquinone. Couples the redox reaction to proton translocation (for every two electrons transferred, four hydrogen ions are translocated across the cytoplasmic membrane), and thus conserves the redox energy in a proton gradient. The polypeptide is NADH-quinone oxidoreductase subunit A (Coxiella burnetii (strain Dugway 5J108-111)).